Reading from the N-terminus, the 244-residue chain is 5-oxoprolinase subunit A (244 aa).

It belongs to the LamB/PxpA family. Forms a complex composed of PxpA, PxpB and PxpC.

The catalysed reaction is 5-oxo-L-proline + ATP + 2 H2O = L-glutamate + ADP + phosphate + H(+). Catalyzes the cleavage of 5-oxoproline to form L-glutamate coupled to the hydrolysis of ATP to ADP and inorganic phosphate. The polypeptide is 5-oxoprolinase subunit A (Shigella dysenteriae serotype 1 (strain Sd197)).